A 653-amino-acid chain; its full sequence is Fusexin 1 (653 aa).

Residues 1-24 (MKRVGNCWKASVAAFFLLMFTAFA) form the signal peptide. Residues 25–559 (AADTTSVDTV…FENIWSGDAN (535 aa)) lie on the Extracellular side of the membrane. Cystine bridges form between Cys-129-Cys-167, Cys-398-Cys-441, Cys-468-Cys-487, and Cys-499-Cys-516. Residues 155 to 160 (DYWTGS) are fusion loop. A helical membrane pass occupies residues 560–580 (ALNWLQVFVTFIAFLGGFALV). Topologically, residues 581 to 604 (GVKLGKIVDGLATEFIPVKDSHVR) are cytoplasmic. 2 helical membrane passes run 605-625 (LVIG…LVTD) and 626-646 (PLGL…YLSA). Residues 647–653 (SAPEINL) lie on the Cytoplasmic side of the membrane.

Belongs to the HAP2/GCS1 family. Fusexin 1 subfamily. As to quaternary structure, homotrimer stabilized by interdomain contacts and numerous Ca(2+) and Na(+) ions.

The protein localises to the cell surface. Its subcellular location is the cell membrane. Functionally, exhibits fusogenic activity. Mediates cell-cell fusion in mammalian cells (bilateral fusion). The protein is Fusexin 1 of Haloplanus natans (strain DSM 17983 / JCM 14081 / CGMCC 1.8972 / RE-101).